Reading from the N-terminus, the 295-residue chain is GTPase Era (295 aa).

The Era-type G domain occupies 5 to 172 (YCGYAAIIGR…EQAVHQLMPE (168 aa)). A G1 region spans residues 13 to 20 (GRPNVGKS). Position 13–20 (13–20 (GRPNVGKS)) interacts with GTP. The segment at 39–43 (QTTRY) is G2. Residues 60 to 63 (DTPG) are G3. GTP contacts are provided by residues 60–64 (DTPGL) and 121–124 (NKVD). Residues 121 to 124 (NKVD) form a G4 region. A G5 region spans residues 151 to 153 (LSA). The region spanning 203 to 279 (LGQEIPYSLA…FLQLWVKVKS (77 aa)) is the KH type-2 domain.

This sequence belongs to the TRAFAC class TrmE-Era-EngA-EngB-Septin-like GTPase superfamily. Era GTPase family. In terms of assembly, monomer.

The protein resides in the cytoplasm. The protein localises to the cell inner membrane. In terms of biological role, an essential GTPase that binds both GDP and GTP, with rapid nucleotide exchange. Plays a role in 16S rRNA processing and 30S ribosomal subunit biogenesis and possibly also in cell cycle regulation and energy metabolism. The polypeptide is GTPase Era (Coxiella burnetii (strain CbuG_Q212) (Coxiella burnetii (strain Q212))).